A 484-amino-acid chain; its full sequence is Aspartyl aminopeptidase (484 aa).

Met1 carries the N-acetylmethionine modification. His84 serves as a coordination point for Zn(2+). His159 contacts substrate. The segment covering 188–206 (PVESKSTTTTTTTESPKTS) has biased composition (low complexity). The tract at residues 188–213 (PVESKSTTTTTTTESPKTSDPQDVNS) is disordered. Position 266 (Asp266) interacts with Zn(2+). Position 301 (Glu301) interacts with substrate. Positions 302 and 354 each coordinate Zn(2+). Substrate-binding residues include Asp354, His357, Lys382, and Tyr389. His448 provides a ligand contact to Zn(2+).

This sequence belongs to the peptidase M18 family. As to quaternary structure, tetrahedron-shaped homododecamer built from six homodimers. Zn(2+) is required as a cofactor.

The protein resides in the cytoplasm. The enzyme catalyses Release of an N-terminal aspartate or glutamate from a peptide, with a preference for aspartate.. Functionally, likely to play an important role in intracellular protein and peptide metabolism. The polypeptide is Aspartyl aminopeptidase (dnpep) (Dictyostelium discoideum (Social amoeba)).